We begin with the raw amino-acid sequence, 333 residues long: 4-hydroxy-2-oxovalerate aldolase (333 aa).

In terms of domain architecture, Pyruvate carboxyltransferase spans 4-254 (VKIFDLTLRD…DCGIDLYKTM (251 aa)). 12 to 13 (RD) lines the substrate pocket. Residue Asp13 participates in Mn(2+) binding. The active-site Proton acceptor is the His16. His193 lines the substrate pocket. 2 residues coordinate Mn(2+): His193 and His195. Tyr284 is a binding site for substrate.

The protein belongs to the 4-hydroxy-2-oxovalerate aldolase family.

It carries out the reaction (S)-4-hydroxy-2-oxopentanoate = acetaldehyde + pyruvate. This is 4-hydroxy-2-oxovalerate aldolase from Desulfitobacterium hafniense (strain DSM 10664 / DCB-2).